Reading from the N-terminus, the 146-residue chain is Phospho-2-dehydro-3-deoxyheptonate aldolase (146 aa).

The protein belongs to the class-II DAHP synthase family. As to quaternary structure, homodimer.

The catalysed reaction is D-erythrose 4-phosphate + phosphoenolpyruvate + H2O = 7-phospho-2-dehydro-3-deoxy-D-arabino-heptonate + phosphate. It functions in the pathway metabolic intermediate biosynthesis; chorismate biosynthesis; chorismate from D-erythrose 4-phosphate and phosphoenolpyruvate: step 1/7. This is Phospho-2-dehydro-3-deoxyheptonate aldolase from Streptomyces lividans.